The primary structure comprises 356 residues: Histidinol-phosphate aminotransferase (356 aa).

Lysine 214 carries the N6-(pyridoxal phosphate)lysine modification.

Belongs to the class-II pyridoxal-phosphate-dependent aminotransferase family. Histidinol-phosphate aminotransferase subfamily. Homodimer. Requires pyridoxal 5'-phosphate as cofactor.

The enzyme catalyses L-histidinol phosphate + 2-oxoglutarate = 3-(imidazol-4-yl)-2-oxopropyl phosphate + L-glutamate. It participates in amino-acid biosynthesis; L-histidine biosynthesis; L-histidine from 5-phospho-alpha-D-ribose 1-diphosphate: step 7/9. The sequence is that of Histidinol-phosphate aminotransferase from Escherichia coli O9:H4 (strain HS).